The following is a 2467-amino-acid chain: Polyprotein P1234 (2467 aa).

The Alphavirus-like MT domain occupies 27 to 258; sequence ESQQVTPNDH…ESRKLLRSWH (232 aa). The segment at 243–262 is nsP1 membrane-binding; the sequence is GSTLYTESRKLLRSWHLPSV. 2 S-palmitoyl cysteine; by host lipidation sites follow: cysteine 416 and cysteine 418. Positions 689–841 constitute a (+)RNA virus helicase ATP-binding domain; that stretch reads DLINPPFHEF…HNICTRVLHK (153 aa). 720–727 provides a ligand contact to a ribonucleoside 5'-triphosphate; the sequence is GVPGSGKS. The (+)RNA virus helicase C-terminal domain occupies 842 to 990; the sequence is SISRRCTLPV…LEEWQEEHDG (149 aa). Positions 1003–1325 constitute a Peptidase C9 domain; that stretch reads DPFQNKAKVC…QKLSSMYACN (323 aa). Positions 1004–1023 are nucleolus localization signal; that stretch reads PFQNKAKVCWAKCLVQVLET. Cysteine 1012 (for cysteine protease nsP2 activity) is an active-site residue. The Nuclear export signal signature appears at 1056-1065; the sequence is TRYYGVDLDS. Histidine 1081 serves as the catalytic For cysteine protease nsP2 activity. The Nuclear localization signal motif lies at 1180-1184; it reads PHKRV. The region spanning 1332–1492 is the Macro domain; it reads CAPSYRVRRA…KIQEAIDRRT (161 aa). Aspartate 1342, asparagine 1356, glycine 1364, glycine 1444, and phenylalanine 1446 together coordinate ADP-D-ribose. 4 residues coordinate Zn(2+): cysteine 1594, cysteine 1596, cysteine 1619, and cysteine 1637. The interval 1766–1803 is disordered; sequence VRKVATEPPSEPEAPIPAPRKRRTTSTTPPHNPGDFVP. Residues 1774-1783 are compositionally biased toward pro residues; it reads PSEPEAPIPA. Short sequence motifs (FGDF; binding to host G3BP1) lie at residues 1820–1823 and 1841–1844; these read FGDL and FGDI. Residues 2222-2337 form the RdRp catalytic domain; the sequence is AVLETDIASF…GVRSDPLMAE (116 aa).

In terms of assembly, interacts with non-structural protein 3. Interacts with RNA-directed RNA polymerase nsP4. Interacts with protease nsP2. interacts with itself. Interacts with mRNA-capping enzyme nsP1. Interacts with host DDX1. Interacts with host DDX3. Interacts (via C-terminus) with host G3BP1; this interaction inhibits the formation of host stress granules on viral mRNAs and the nsp3-G3BP1 complexes bind viral RNAs and probably orchestrate the assembly of viral replication complexes. Interacts (via C-terminus) with host G3BP2; this interaction inhibits the formation of host stress granules on viral mRNAs and the nsp3-G3BP2 complexes bind viral RNAs and probably orchestrate the assembly of viral replication complexes. As to quaternary structure, interacts with mRNA-capping enzyme nsP1. Interacts with protease nsP2. interacts with itself. In terms of assembly, interacts with RNA-directed RNA polymerase nsP4. Interacts with mRNA-capping enzyme nsP1. Interacts with KPNA1/karyopherin-alpha1; this interaction probably allows the active transport of protease nsP2 into the host nucleus. Mg(2+) is required as a cofactor. Requires Mn(2+) as cofactor. In terms of processing, specific enzymatic cleavages in vivo yield mature proteins. The processing of the polyprotein is temporally regulated. In early stages (1.7 hpi), P1234 is first cleaved in trans through its nsP2 protease activity, releasing P123' and nsP4, which associate to form the early replication complex. At the same time, P1234 is also cut at the nsP1/nsP2 site early in infection but with lower efficiency. After replication of the viral minus-strand RNAs (4 hpi), the polyproteins are cut at the nsP1/nsP2 and nsP2/nsP3 sites very efficiently, preventing accumulation of P123' and P1234 and allowing the formation of the late replication complex. NsP3'/nsP4 site is not cleaved anymore and P34 is produced rather than nsP4. Post-translationally, specific enzymatic cleavages in vivo yield mature proteins. The processing of the polyprotein is temporally regulated. In early stages (1.7 hpi), P123 is cleaved at the nsP1/nsP2 site with low efficiency. After replication of the viral minus-strand RNAs (4 hpi), the polyproteins are cut at the nsP1/nsP2 and nsP2/nsP3 sites very efficiently, preventing accumulation of P123 and allowing the formation of the late replication complex. Specific enzymatic cleavages in vivo yield mature proteins. The processing of the polyprotein is temporally regulated. In early stages (1.7 hpi), P123' is cleaved at the nsP1/nsP2 site with low efficiency. After replication of the viral minus-strand RNAs (4 hpi), the polyproteins are cut at the nsP1/nsP2 and nsP2/nsP3 sites very efficiently, preventing accumulation of P123' and allowing the formation of the late replication complex. In terms of processing, palmitoylated by host palmitoyltransferases ZDHHC2 and ZDHHC19. Post-translationally, phosphorylated by host on serines and threonines. Ubiquitinated; targets the protein for rapid degradation via the ubiquitin system. Nsp4 is present in extremely low quantities due to low frequency of translation through the amber stop-codon and the degradation by the ubiquitin pathway.

It localises to the host cytoplasmic vesicle membrane. The protein resides in the host cell membrane. It is found in the host cell projection. Its subcellular location is the host filopodium. The protein localises to the host nucleus. It localises to the host cytoplasm. It catalyses the reaction GTP + S-adenosyl-L-methionine = N(7)-methyl-GTP + S-adenosyl-L-homocysteine. The catalysed reaction is N(7)-methyl-GTP + L-histidyl-[protein] = N(tele)-(N(7)-methylguanosine 5'-phospho)-L-histidyl-[protein] + diphosphate. It carries out the reaction N(tele)-(N(7)-methylguanosine 5'-phospho)-L-histidyl-[protein] + a 5'-end diphospho-(purine-ribonucleoside) in mRNA + H(+) = a 5'-end (N(7)-methyl 5'-triphosphoguanosine)-(purine-ribonucleoside) in mRNA + L-histidyl-[protein]. The enzyme catalyses a 5'-end triphospho-ribonucleoside in mRNA + H2O = a 5'-end diphospho-ribonucleoside in mRNA + phosphate + H(+). It catalyses the reaction a ribonucleoside 5'-triphosphate + H2O = a ribonucleoside 5'-diphosphate + phosphate + H(+). The catalysed reaction is ATP + H2O = ADP + phosphate + H(+). It carries out the reaction RNA(n) + a ribonucleoside 5'-triphosphate = RNA(n+1) + diphosphate. The enzyme catalyses RNA(n) + ATP = RNA(n)-3'-adenine ribonucleotide + diphosphate. It catalyses the reaction 4-O-(ADP-D-ribosyl)-L-aspartyl-[protein] + H2O = L-aspartyl-[protein] + ADP-D-ribose + H(+). The catalysed reaction is 5-O-(ADP-D-ribosyl)-L-glutamyl-[protein] + H2O = L-glutamyl-[protein] + ADP-D-ribose + H(+). It carries out the reaction ADP-alpha-D-ribose 1''-phosphate + H2O = ADP-D-ribose + phosphate. Its function is as follows. Inactive precursor of the viral replicase, which is activated by cleavages carried out by the viral protease nsP2. The early replication complex formed by the polyprotein P123 and nsP4 synthesizes minus-strand RNAs. As soon P123 is cleaved into mature proteins, the plus-strand RNAs synthesis begins. In terms of biological role, the early replication complex formed by the polyprotein P123' and nsP4 synthesizes minus-strand RNAs. Polyprotein P123' is a short-lived polyprotein that accumulates during early stage of infection. As soon P123' is cleaved into mature proteins, the plus-strand RNAs synthesis begins. Functionally, cytoplasmic capping enzyme that catalyzes two virus-specific reactions: methyltransferase and nsP1 guanylyltransferase. mRNA-capping is necessary since all viral RNAs are synthesized in the cytoplasm, and host capping enzymes are restricted to the nucleus. The enzymatic reaction involves a covalent link between 7-methyl-GMP and nsP1, whereas eukaryotic capping enzymes form a covalent complex only with GMP. nsP1 capping consists in the following reactions: GTP is first methylated into 7-methyl-GMP and then is covalently linked to nsP1 to form the m7GMp-nsP1 complex from which 7-methyl-GMP complex is transferred to the mRNA to create the cap structure. NsP1 is needed for the initiation of the minus-strand RNAs synthesis. Probably serves as a membrane anchor for the replication complex composed of nsP1-nsP4. Palmitoylated nsP1 is remodeling host cell cytoskeleton, and induces filopodium-like structure formation at the surface of the host cell. Its function is as follows. Multifunctional protein whose N-terminus is part of the RNA polymerase complex and displays NTPase, RNA triphosphatase and helicase activities. NTPase and RNA triphosphatase are involved in viral RNA capping and helicase keeps a check on the dsRNA replication intermediates. The C-terminus harbors a protease that specifically cleaves the polyproteins and releases the mature proteins. Required for the shutoff of minus-strand RNAs synthesis. Specifically inhibits the host IFN response by promoting the nuclear export of host STAT1. Also inhibits host transcription by inducing rapid proteasome-dependent degradation of POLR2A, a catalytic subunit of the RNAPII complex. The resulting inhibition of cellular protein synthesis serves to ensure maximal viral gene expression and to evade host immune response. Seems to be essential for minus-strand RNAs and subgenomic 26S mRNAs synthesis. Displays mono-ADP-ribosylhydrolase activity. ADP-ribosylation is a post-translational modification that controls various processes of the host cell and the virus probably needs to revert it for optimal viral replication. Binds proteins of FXR family and sequesters them into the viral RNA replication complexes thereby inhibiting the formation of host stress granules on viral mRNAs. The nsp3'-FXR complexes bind viral RNAs and probably orchestrate the assembly of viral replication complexes, thanks to the ability of FXR family members to self-assemble and bind DNA. In terms of biological role, seems to be essential for minus-strand RNAs and subgenomic 26S mRNAs synthesis. Displays mono-ADP-ribosylhydrolase activity. ADP-ribosylation is a post-translantional modification that controls various processes of the host cell and the virus probably needs to revert it for optimal viral replication. Binds proteins of G3BP family and sequesters them into the viral RNA replication complexes thereby inhibiting the formation of host stress granules on viral mRNAs. The nsp3-G3BP complexes bind viral RNAs and probably orchestrate the assembly of viral replication complexes, thanks to the ability of G3BP family members to self-assemble and bind DNA. Functionally, RNA dependent RNA polymerase. Replicates genomic and antigenomic RNA by recognizing replications specific signals. The early replication complex formed by the polyprotein P123 and nsP4 synthesizes minus-strand RNAs. The late replication complex composed of fully processed nsP1-nsP4 is responsible for the production of genomic and subgenomic plus-strand RNAs. The core catalytic domain of nsP4 also possesses terminal adenylyltransferase (TATase) activity that is probably involved in maintenance and repair of the poly(A) tail, an element required for replication of the viral genome. The polypeptide is Polyprotein P1234 (Sagiyama virus (SAGV)).